The primary structure comprises 25 residues: Dermaseptin-5.1TR (25 aa).

Val-25 is modified (valine amide).

Expressed by the skin glands.

It is found in the secreted. Functionally, has antimicrobial activity. The protein is Dermaseptin-5.1TR of Phyllomedusa trinitatis (Trinidad leaf frog).